A 234-amino-acid polypeptide reads, in one-letter code: Transcription factor bHLH160 (234 aa).

The segment covering 1–13 (MSSQPNHQTSISS) has biased composition (polar residues). Residues 1 to 67 (MSSQPNHQTS…GAAKKQDHNA (67 aa)) form a disordered region. The segment covering 27-37 (IVEKESAEKDT) has biased composition (basic and acidic residues). One can recognise a bHLH domain in the interval 60–115 (AKKQDHNAKERLRRMRLHASYLTLGTLLPDHSSSSSKKKWSAPSIIDNVITYIPKL).

Belongs to the bHLH protein family.

It localises to the nucleus. This Arabidopsis thaliana (Mouse-ear cress) protein is Transcription factor bHLH160.